Here is a 568-residue protein sequence, read N- to C-terminus: K(+) efflux antiporter 5 (568 aa).

The first 20 residues, 1 to 20 (MARFAVIGLTFLLLLGTSLS), serve as a signal peptide directing secretion. Residues 59–78 (EFSENDSPEGSDGASFNSSV) are disordered. The next 12 membrane-spanning stretches (helical) occupy residues 154-174 (LISD…VFSC), 178-198 (PVIV…LKFI), 201-221 (MVQV…ALGL), 230-250 (VVGP…MFLC), 264-284 (GIFV…KFLV), 298-318 (IGIL…LPVL), 334-354 (LLLI…SFVP), 389-409 (LGLS…TTEF), 422-442 (NLFA…HFLW), 447-467 (ILLA…AVVV), 476-496 (ISFH…VLLS), and 510-530 (LLLL…FKLI).

Belongs to the monovalent cation:proton antiporter 2 (CPA2) transporter (TC 2.A.37) family. KEA (TC 2.A.37.1) subfamily. As to expression, expressed in roots, stems, leaves, flowers and silique.

It is found in the golgi apparatus membrane. The protein localises to the golgi apparatus. It localises to the trans-Golgi network membrane. The protein resides in the prevacuolar compartment membrane. Its subcellular location is the endomembrane system. It carries out the reaction K(+)(in) + H(+)(out) = K(+)(out) + H(+)(in). In terms of biological role, electroneutral K(+)/H(+) efflux antiporter involved in K(+) homeostasis and osmotic adjustment. Together with KEA4 and KEA6, promotes growth and development, and facilitates endosomal pH and ions homeostasis, as well as salt tolerance (e.g. K(+), NaCl and LiCl), probably by supporting cell wall biosynthesis during rapid etiolated seedling growth. The chain is K(+) efflux antiporter 5 from Arabidopsis thaliana (Mouse-ear cress).